The chain runs to 415 residues: Serine hydroxymethyltransferase 1 (415 aa).

(6S)-5,6,7,8-tetrahydrofolate contacts are provided by residues L122 and 126 to 128 (GHL). An N6-(pyridoxal phosphate)lysine modification is found at K230.

The protein belongs to the SHMT family. Homodimer. It depends on pyridoxal 5'-phosphate as a cofactor.

Its subcellular location is the cytoplasm. It carries out the reaction (6R)-5,10-methylene-5,6,7,8-tetrahydrofolate + glycine + H2O = (6S)-5,6,7,8-tetrahydrofolate + L-serine. It participates in one-carbon metabolism; tetrahydrofolate interconversion. Its pathway is amino-acid biosynthesis; glycine biosynthesis; glycine from L-serine: step 1/1. Its function is as follows. Catalyzes the reversible interconversion of serine and glycine with tetrahydrofolate (THF) serving as the one-carbon carrier. This reaction serves as the major source of one-carbon groups required for the biosynthesis of purines, thymidylate, methionine, and other important biomolecules. Also exhibits THF-independent aldolase activity toward beta-hydroxyamino acids, producing glycine and aldehydes, via a retro-aldol mechanism. The protein is Serine hydroxymethyltransferase 1 of Burkholderia thailandensis (strain ATCC 700388 / DSM 13276 / CCUG 48851 / CIP 106301 / E264).